The following is a 305-amino-acid chain: Acetyl-coenzyme A carboxylase carboxyl transferase subunit alpha (305 aa).

In terms of domain architecture, CoA carboxyltransferase C-terminal spans 33-280 (AKLESSTALS…KEQILKDLAD (248 aa)).

This sequence belongs to the AccA family. In terms of assembly, acetyl-CoA carboxylase is a heterohexamer composed of biotin carboxyl carrier protein (AccB), biotin carboxylase (AccC) and two subunits each of ACCase subunit alpha (AccA) and ACCase subunit beta (AccD).

The protein localises to the cytoplasm. The enzyme catalyses N(6)-carboxybiotinyl-L-lysyl-[protein] + acetyl-CoA = N(6)-biotinyl-L-lysyl-[protein] + malonyl-CoA. It participates in lipid metabolism; malonyl-CoA biosynthesis; malonyl-CoA from acetyl-CoA: step 1/1. Its function is as follows. Component of the acetyl coenzyme A carboxylase (ACC) complex. First, biotin carboxylase catalyzes the carboxylation of biotin on its carrier protein (BCCP) and then the CO(2) group is transferred by the carboxyltransferase to acetyl-CoA to form malonyl-CoA. The protein is Acetyl-coenzyme A carboxylase carboxyl transferase subunit alpha of Treponema denticola (strain ATCC 35405 / DSM 14222 / CIP 103919 / JCM 8153 / KCTC 15104).